A 122-amino-acid polypeptide reads, in one-letter code: Autophagy-related protein 8b (122 aa).

A lipid anchor (Phosphatidylethanolamine amidated glycine) is attached at glycine 117. Positions 118-122 (GSFYC) are cleaved as a propeptide — removed in mature form.

This sequence belongs to the ATG8 family. Interacts with ATG4. Interacts with NBR1. The C-terminal 5 residues are removed by ATG4 to expose Gly-117 at the C-terminus. This Gly-117 forms then a thioester bond with the 'Cys-558' of ATG7 (E1-like activating enzyme) before being transferred to the 'Cys-258' of ATG3 (the specific E2 conjugating enzyme), in order to be finally amidated with phosphatidylethanolamine. This lipid modification anchors ATG8 to autophagosomes. Constitutively expressed.

The protein resides in the cytoplasmic vesicle. It localises to the autophagosome membrane. It is found in the vacuole membrane. Its subcellular location is the cytoplasm. The protein localises to the cytoskeleton. Its function is as follows. Ubiquitin-like modifier involved in autophagosomes formation. May mediate the delivery of the autophagosomes to the vacuole via the microtubule cytoskeleton. This is Autophagy-related protein 8b (ATG8B) from Arabidopsis thaliana (Mouse-ear cress).